Here is a 637-residue protein sequence, read N- to C-terminus: Early transcription factor 70 kDa subunit (637 aa).

Residues 32–185 form the Helicase ATP-binding domain; the sequence is RTIIDENRSV…GHIIDLMSEE (154 aa). An ATP-binding site is contributed by 45–52; it reads HIMGSGKT. Residues 135–138 carry the DEXH box motif; it reads DEAH. A Helicase C-terminal domain is found at 327-507; sequence KFKYFINRIQ…VLPFDIKKLL (181 aa).

It belongs to the helicase family. VETF subfamily. Heterodimer of a 70 kDa and a 82 kDa subunit. Part of the early transcription complex composed of ETF, RAP94/OPG109, and the DNA-directed RNA polymerase.

The protein resides in the virion. Functionally, acts with RNA polymerase to initiate transcription from early gene promoters. Is recruited by the RPO-associated protein of 94 kDa RAP94/OPG109 to form the early transcription complex, which also contains the core RNA polymerase. ETF heterodimer binds to early gene promoters. The polypeptide is Early transcription factor 70 kDa subunit (OPG118) (Homo sapiens (Human)).